The following is a 390-amino-acid chain: Zinc transporter 7-B (390 aa).

Residues 1–37 lie on the Cytoplasmic side of the membrane; that stretch reads MLPLSIKDDEYKPPKFNLVRKVSGWIRSIFSDSTSRN. Residues 38–58 traverse the membrane as a helical segment; that stretch reads LFCFLCLNLSFAFVELFYGIW. At 59–67 the chain is on the lumenal side; that stretch reads SNSLGLISD. The helical transmembrane segment at 68–88 threads the bilayer; the sequence is SFHMFFDCTALLAGLAASVIS. Topologically, residues 89 to 102 are cytoplasmic; sequence RWKTNETFSYGYVR. Residues 103–123 traverse the membrane as a helical segment; sequence AEVLAGFVNGLFLIFTAFFIF. Topologically, residues 124 to 140 are lumenal; sequence SEGIERALDTPEVHHER. Residues 141–161 traverse the membrane as a helical segment; that stretch reads LLPVSIMGFLVNLIGIFVFQH. The interval 161 to 226 is his-rich loop; the sequence is HGGGHGHSHE…GHDHSHKHGH (66 aa). Residues 162-250 lie on the Cytoplasmic side of the membrane; the sequence is GGGHGHSHES…KGSSKQILEG (89 aa). Residues 166 to 243 form a disordered region; the sequence is GHSHESGHGH…DEPPEENKGS (78 aa). Over residues 187-201 the composition is skewed to basic residues; the sequence is GHSHSHGGGHGHSHG. 2 stretches are compositionally biased toward basic and acidic residues: residues 202 to 218 and 232 to 242; these read GGHEHGHSHGGGHEHGH and CHDEPPEENKG. Residues 251-271 form a helical membrane-spanning segment; the sequence is VFLHIVADALGSVGVIISTIL. Residues 272–276 are Lumenal-facing; it reads MQQYG. The helical transmembrane segment at 277 to 297 threads the bilayer; it reads LMIADPICSMLIALLIFVSVI. Residues 298-390 lie on the Cytoplasmic side of the membrane; that stretch reads PLLKQSIGIL…LYVQIDLAAM (93 aa).

The protein belongs to the cation diffusion facilitator (CDF) transporter (TC 2.A.4) family. SLC30A subfamily. Homooligomer.

The protein localises to the golgi apparatus membrane. Its subcellular location is the cytoplasmic vesicle. The protein resides in the golgi apparatus. It is found in the trans-Golgi network. It localises to the sarcoplasmic reticulum. The protein localises to the mitochondrion. The catalysed reaction is Zn(2+)(in) = Zn(2+)(out). Zinc ion transporter mediating zinc entry from the cytosol into the lumen of organelles along the secretory pathway. By contributing to zinc ion homeostasis within the early secretory pathway, regulates the activation and folding of enzymes like alkaline phosphatases. This chain is Zinc transporter 7-B (slc30a7-b), found in Xenopus laevis (African clawed frog).